Reading from the N-terminus, the 397-residue chain is Serpin B10 (397 aa).

The segment at 62 to 85 (RDQGVKSSPESEKKRKMEFNSSNS) is disordered. Residues 70–79 (PESEKKRKME) are compositionally biased toward basic and acidic residues. The Nuclear localization signal motif lies at 74 to 77 (KKRK).

It belongs to the serpin family. Ov-serpin subfamily.

The protein resides in the nucleus. Its subcellular location is the cytoplasm. In terms of biological role, protease inhibitor that may play a role in the regulation of protease activities during hematopoiesis and apoptosis induced by TNF. May regulate protease activities in the cytoplasm and in the nucleus. The polypeptide is Serpin B10 (SERPINB10) (Papio anubis (Olive baboon)).